Here is a 637-residue protein sequence, read N- to C-terminus: 1-deoxy-D-xylulose-5-phosphate synthase (637 aa).

Thiamine diphosphate contacts are provided by residues histidine 73 and 113–115 (SHA). Mg(2+) is bound at residue aspartate 144. Residues 145-146 (GA), asparagine 174, tyrosine 285, and glutamate 366 contribute to the thiamine diphosphate site. Asparagine 174 is a Mg(2+) binding site.

Belongs to the transketolase family. DXPS subfamily. As to quaternary structure, homodimer. Mg(2+) serves as cofactor. It depends on thiamine diphosphate as a cofactor.

The catalysed reaction is D-glyceraldehyde 3-phosphate + pyruvate + H(+) = 1-deoxy-D-xylulose 5-phosphate + CO2. The protein operates within metabolic intermediate biosynthesis; 1-deoxy-D-xylulose 5-phosphate biosynthesis; 1-deoxy-D-xylulose 5-phosphate from D-glyceraldehyde 3-phosphate and pyruvate: step 1/1. Catalyzes the acyloin condensation reaction between C atoms 2 and 3 of pyruvate and glyceraldehyde 3-phosphate to yield 1-deoxy-D-xylulose-5-phosphate (DXP). The sequence is that of 1-deoxy-D-xylulose-5-phosphate synthase from Streptomyces griseus subsp. griseus (strain JCM 4626 / CBS 651.72 / NBRC 13350 / KCC S-0626 / ISP 5235).